The following is a 216-amino-acid chain: A-type ATP synthase subunit D (216 aa).

The protein belongs to the V-ATPase D subunit family. As to quaternary structure, has multiple subunits with at least A(3), B(3), C, D, E, F, H, I and proteolipid K(x). The N-terminus is blocked.

It is found in the cell membrane. Its function is as follows. Component of the A-type ATP synthase that produces ATP from ADP in the presence of a proton gradient across the membrane. The protein is A-type ATP synthase subunit D of Sulfurisphaera tokodaii (strain DSM 16993 / JCM 10545 / NBRC 100140 / 7) (Sulfolobus tokodaii).